The chain runs to 239 residues: tRNA (guanine-N(1)-)-methyltransferase (239 aa).

S-adenosyl-L-methionine-binding positions include Gly-108 and 127–132 (LGDYVL).

This sequence belongs to the RNA methyltransferase TrmD family. As to quaternary structure, homodimer.

It localises to the cytoplasm. The catalysed reaction is guanosine(37) in tRNA + S-adenosyl-L-methionine = N(1)-methylguanosine(37) in tRNA + S-adenosyl-L-homocysteine + H(+). Functionally, specifically methylates guanosine-37 in various tRNAs. The protein is tRNA (guanine-N(1)-)-methyltransferase of Streptococcus pneumoniae serotype 19F (strain G54).